Consider the following 762-residue polypeptide: Probable inorganic carbon transporter subunit DabA (762 aa).

Zn(2+) is bound by residues Cys-279, Asp-281, His-461, and Cys-476.

This sequence belongs to the inorganic carbon transporter (TC 9.A.2) DabA family. Forms a complex with DabB. Zn(2+) is required as a cofactor.

The protein localises to the cell inner membrane. Part of an energy-coupled inorganic carbon pump. The protein is Probable inorganic carbon transporter subunit DabA of Legionella pneumophila (strain Lens).